Reading from the N-terminus, the 374-residue chain is ATPase ASNA1 homolog (374 aa).

44 to 51 (KGGVGKTT) contacts ATP. D73 is an active-site residue. ATP is bound by residues E244 and N271.

The protein belongs to the arsA ATPase family. As to quaternary structure, homodimer.

The protein localises to the cytoplasm. Its subcellular location is the endoplasmic reticulum. Functionally, ATPase required for the post-translational delivery of tail-anchored (TA) proteins to the endoplasmic reticulum. Recognizes and selectively binds the transmembrane domain of TA proteins in the cytosol. This complex then targets to the endoplasmic reticulum by membrane-bound receptors, where the tail-anchored protein is released for insertion. This process is regulated by ATP binding and hydrolysis. ATP binding drives the homodimer towards the closed dimer state, facilitating recognition of newly synthesized TA membrane proteins. ATP hydrolysis is required for insertion. Subsequently, the homodimer reverts towards the open dimer state, lowering its affinity for the membrane-bound receptor, and returning it to the cytosol to initiate a new round of targeting. The chain is ATPase ASNA1 homolog from Plasmodium vivax (strain Salvador I).